Here is a 166-residue protein sequence, read N- to C-terminus: Glycine-rich RNA-binding protein GRP1A (166 aa).

The region spanning 8–86 is the RRM domain; the sequence is YRCFVGGLAW…RSITVNEAQS (79 aa). Residues 68–166 form a disordered region; the sequence is GMNGQDLDGR…YGGSGGGGGW (99 aa). Composition is skewed to gly residues over residues 88-146 and 153-166; these read GSGG…YGGG and EGGG…GGGW.

In terms of tissue distribution, predominantly expressed in meristematic and growing tissue.

The protein resides in the nucleus. Functionally, may play a general role in circadian phenomena associated with meristematic tissue. This is Glycine-rich RNA-binding protein GRP1A from Sinapis alba (White mustard).